The chain runs to 213 residues: MKGLFISGSGTNVGKTFVAQYLIRLLSNTLKVSARKPVESDCENKNGRLIPKDALLLSKACNINEPIDKVCRYKLESCSSAQMASQDSGLKLTLDDLVDACMSDEFVIVEGTGGLLSPIARQALNSDLIQALDMPVVLVIKDELGAVNQALLSINSAQSCGLSISMLVLNQIQPNFLKNAQAIKQHTDIDINVFNQNHLASFERKVKKILLVI.

Residue 12–17 participates in ATP binding; that stretch reads NVGKTF. Thr16 is a binding site for Mg(2+). Residue Lys36 is part of the active site. Ser40 contacts substrate. ATP is bound by residues Asp53, 110–113, and 170–171; these read EGTG and NQ. Residues Asp53 and Glu110 each coordinate Mg(2+).

The protein belongs to the dethiobiotin synthetase family. Homodimer. The cofactor is Mg(2+).

The protein resides in the cytoplasm. It carries out the reaction (7R,8S)-7,8-diammoniononanoate + CO2 + ATP = (4R,5S)-dethiobiotin + ADP + phosphate + 3 H(+). It functions in the pathway cofactor biosynthesis; biotin biosynthesis; biotin from 7,8-diaminononanoate: step 1/2. Functionally, catalyzes a mechanistically unusual reaction, the ATP-dependent insertion of CO2 between the N7 and N8 nitrogen atoms of 7,8-diaminopelargonic acid (DAPA, also called 7,8-diammoniononanoate) to form a ureido ring. The sequence is that of ATP-dependent dethiobiotin synthetase BioD from Ruthia magnifica subsp. Calyptogena magnifica.